The primary structure comprises 241 residues: Uridylate kinase (241 aa).

ATP is bound at residue Lys14–Gly17. An involved in allosteric activation by GTP region spans residues Gly22–Gly27. Residue Gly56 coordinates UMP. The ATP site is built by Gly57 and Arg61. Residues Asp76 and Thr137 to Thr144 each bind UMP. Residues Thr164, Gln165, Tyr170, and Asp173 each coordinate ATP.

Belongs to the UMP kinase family. Homohexamer.

The protein resides in the cytoplasm. It carries out the reaction UMP + ATP = UDP + ADP. It functions in the pathway pyrimidine metabolism; CTP biosynthesis via de novo pathway; UDP from UMP (UMPK route): step 1/1. Allosterically activated by GTP. Inhibited by UTP. Its function is as follows. Catalyzes the reversible phosphorylation of UMP to UDP. This Agrobacterium fabrum (strain C58 / ATCC 33970) (Agrobacterium tumefaciens (strain C58)) protein is Uridylate kinase.